The primary structure comprises 515 residues: Cytochrome P450 1A1 (515 aa).

Phe225 serves as a coordination point for substrate. Cys459 lines the heme pocket.

Belongs to the cytochrome P450 family. It depends on heme as a cofactor.

It is found in the endoplasmic reticulum membrane. It localises to the microsome membrane. It catalyses the reaction an organic molecule + reduced [NADPH--hemoprotein reductase] + O2 = an alcohol + oxidized [NADPH--hemoprotein reductase] + H2O + H(+). Cytochromes P450 are a group of heme-thiolate monooxygenases. They oxidize a variety of structurally unrelated compounds, including steroids, fatty acids, and xenobiotics. The chain is Cytochrome P450 1A1 (cyp1a1) from Microgadus tomcod (Atlantic tomcod).